Consider the following 297-residue polypeptide: Large ribosomal subunit protein uL18 (297 aa).

Residue glycine 2 is modified to N-acetylglycine. N6-acetyllysine occurs at positions 5 and 48. Position 185 is a phosphoserine (serine 185). Position 220 is an N6-acetyllysine; alternate (lysine 220). Residue lysine 220 forms a Glycyl lysine isopeptide (Lys-Gly) (interchain with G-Cter in SUMO1); alternate linkage. Lysine 220 participates in a covalent cross-link: Glycyl lysine isopeptide (Lys-Gly) (interchain with G-Cter in SUMO2); alternate. Threonine 232 bears the Phosphothreonine mark. The interval 253 to 297 (YEKKPKREVKKKRWNRPKMSLAQKKDRVAQKKASFLRAQERAAES) is disordered. Positions 258–268 (KREVKKKRWNR) are enriched in basic residues. Serine 272 bears the Phosphoserine mark.

This sequence belongs to the universal ribosomal protein uL18 family. In terms of assembly, component of the large ribosomal subunit (LSU). Part of the 5S RNP complex, which is a LSU subcomplex composed of the 5S RNA, RPL5 and RPL11. Component of a hexameric 5S RNP precursor complex, composed of 5S RNA, RRS1, RPF2/BXDC1, RPL5, RPL11 and HEATR3; this complex acts as a precursor for ribosome assembly. Interacts with isoform 1 of NVL in an ATP-dependent manner. Interacts with RRP1B. Interacts with IPO5, IPO7 and KPNB1; these interactions may be involved in RPL5 nuclear import for the assembly of ribosomal subunits.

The protein localises to the cytoplasm. It localises to the nucleus. Its subcellular location is the nucleolus. Functionally, component of the ribosome, a large ribonucleoprotein complex responsible for the synthesis of proteins in the cell. The small ribosomal subunit (SSU) binds messenger RNAs (mRNAs) and translates the encoded message by selecting cognate aminoacyl-transfer RNA (tRNA) molecules. The large subunit (LSU) contains the ribosomal catalytic site termed the peptidyl transferase center (PTC), which catalyzes the formation of peptide bonds, thereby polymerizing the amino acids delivered by tRNAs into a polypeptide chain. The nascent polypeptides leave the ribosome through a tunnel in the LSU and interact with protein factors that function in enzymatic processing, targeting, and the membrane insertion of nascent chains at the exit of the ribosomal tunnel. As part of the 5S RNP/5S ribonucleoprotein particle it is an essential component of the LSU, required for its formation and the maturation of rRNAs. It also couples ribosome biogenesis to p53/TP53 activation. As part of the 5S RNP it accumulates in the nucleoplasm and inhibits MDM2, when ribosome biogenesis is perturbed, mediating the stabilization and the activation of TP53. In Oryctolagus cuniculus (Rabbit), this protein is Large ribosomal subunit protein uL18 (RPL5).